A 251-amino-acid polypeptide reads, in one-letter code: Imidazole glycerol phosphate synthase subunit HisF (251 aa).

Residues Asp11 and Asp130 contribute to the active site.

Belongs to the HisA/HisF family. In terms of assembly, heterodimer of HisH and HisF.

The protein resides in the cytoplasm. It carries out the reaction 5-[(5-phospho-1-deoxy-D-ribulos-1-ylimino)methylamino]-1-(5-phospho-beta-D-ribosyl)imidazole-4-carboxamide + L-glutamine = D-erythro-1-(imidazol-4-yl)glycerol 3-phosphate + 5-amino-1-(5-phospho-beta-D-ribosyl)imidazole-4-carboxamide + L-glutamate + H(+). Its pathway is amino-acid biosynthesis; L-histidine biosynthesis; L-histidine from 5-phospho-alpha-D-ribose 1-diphosphate: step 5/9. Its function is as follows. IGPS catalyzes the conversion of PRFAR and glutamine to IGP, AICAR and glutamate. The HisF subunit catalyzes the cyclization activity that produces IGP and AICAR from PRFAR using the ammonia provided by the HisH subunit. In Chlorobium limicola (strain DSM 245 / NBRC 103803 / 6330), this protein is Imidazole glycerol phosphate synthase subunit HisF.